The primary structure comprises 248 residues: MSVSPVSIVSTPVAVSASPAGAPVQPVTVRWRGREAYEASFDAMRAFTDTRTADTGDEIWVVEHPPVYTLGQAGDPAHLLVADSGVPLVKVDRGGQITYHGPGQIVVYLLLDLRRRKLMVRTLVTKIEEAVIETLAAYNLASVRKAGAPGIYVASGVHEGAKIAALGLKIRNGCSYHGLSLNVKMDLRPFLAINPCGYAGLETVDMASLAVAADWNDVAHTLVGRLIANLDGASAAADKPHALEQSND.

The BPL/LPL catalytic domain maps to 53–238; it reads ADTGDEIWVV…NLDGASAAAD (186 aa). Residues 93 to 100, 165 to 167, and 178 to 180 contribute to the substrate site; these read RGGQITYH, ALG, and GLS. Catalysis depends on cysteine 196, which acts as the Acyl-thioester intermediate.

This sequence belongs to the LipB family.

It is found in the cytoplasm. It catalyses the reaction octanoyl-[ACP] + L-lysyl-[protein] = N(6)-octanoyl-L-lysyl-[protein] + holo-[ACP] + H(+). It functions in the pathway protein modification; protein lipoylation via endogenous pathway; protein N(6)-(lipoyl)lysine from octanoyl-[acyl-carrier-protein]: step 1/2. Functionally, catalyzes the transfer of endogenously produced octanoic acid from octanoyl-acyl-carrier-protein onto the lipoyl domains of lipoate-dependent enzymes. Lipoyl-ACP can also act as a substrate although octanoyl-ACP is likely to be the physiological substrate. In Burkholderia orbicola (strain MC0-3), this protein is Octanoyltransferase.